The chain runs to 912 residues: Phosphatidylinositol-3-phosphatase SAC1 (912 aa).

The segment at 1-29 (MAKSENSTTSTFSSFANKIQPSNDAESDP) is disordered. Residues 173 to 575 (LSSVDLTKDF…GDALAQQYGG (403 aa)) enclose the SAC domain. The Phosphatase catalytic core motif lies at 511–522 (RTNCIDCLDRTN). Residues 715–912 (RPGGNTGSTG…VGDDKVPKVI (198 aa)) are required for subcellular localization. The disordered stretch occupies residues 740–766 (LFGSRKPEESSSATKSGADDSEKGVTS).

Component of the PI(3,5)P2 regulatory complex at least composed of ATG18, SAC/FIG4, FAB1 and VAC14. The cofactor is Mg(2+). As to expression, ubiquitous with higher expression level in both young elongating and nonelongating stems. Detected in vascular tissues.

The protein resides in the vacuole membrane. Its subcellular location is the golgi apparatus. It carries out the reaction a 1,2-diacyl-sn-glycero-3-phospho-(1D-myo-inositol-3-phosphate) + H2O = a 1,2-diacyl-sn-glycero-3-phospho-(1D-myo-inositol) + phosphate. The catalysed reaction is a 1,2-diacyl-sn-glycero-3-phospho-(1D-myo-inositol-3,5-bisphosphate) + H2O = a 1,2-diacyl-sn-glycero-3-phospho-(1D-myo-inositol-3-phosphate) + phosphate. The enzyme catalyses a 1,2-diacyl-sn-glycero-3-phospho-(1D-myo-inositol 4-phosphate) + H2O = a 1,2-diacyl-sn-glycero-3-phospho-(1D-myo-inositol) + phosphate. Functionally, phosphoinositide phosphatase which catalyzes the hydrolysis of phosphatidylinositol-3,5-bisphosphate (PtdIns(3,5)P2). Can also catalyze the hydrolysis of phosphatidylinositol 3-phosphate (PtdIns(3)P) and phosphatidylinositol 4-phosphate (PtdIns(4)P). Required for normal cell morphogenesis, cell wall synthesis, and actin organization. This is Phosphatidylinositol-3-phosphatase SAC1 (SAC1) from Arabidopsis thaliana (Mouse-ear cress).